A 529-amino-acid chain; its full sequence is Tyrosinase (529 aa).

The first 18 residues, methionine 1 to glycine 18, serve as a signal peptide directing secretion. Over histidine 19–serine 476 the chain is Lumenal, melanosome. N-linked (GlcNAc...) asparagine glycosylation is found at asparagine 86, asparagine 111, and asparagine 161. Histidine 180, histidine 202, and histidine 211 together coordinate Cu cation. A glycan (N-linked (GlcNAc...) asparagine) is linked at asparagine 230. Residues serine 287–proline 313 form a disordered region. Asparagine 337 carries N-linked (GlcNAc...) asparagine glycosylation. Histidine 363 and histidine 367 together coordinate Cu cation. Asparagine 371 is a glycosylation site (N-linked (GlcNAc...) asparagine). A Cu cation-binding site is contributed by histidine 390. The chain crosses the membrane as a helical span at residues tryptophan 477–serine 497. At leucine 498 to leucine 529 the chain is on the cytoplasmic side.

The protein belongs to the tyrosinase family. In terms of assembly, forms an OPN3-dependent complex with DCT in response to blue light in melanocytes. Cu(2+) is required as a cofactor. Glycosylated.

It is found in the melanosome membrane. The protein resides in the melanosome. The catalysed reaction is 2 L-dopa + O2 = 2 L-dopaquinone + 2 H2O. It carries out the reaction L-tyrosine + O2 = L-dopaquinone + H2O. The enzyme catalyses 2 5,6-dihydroxyindole-2-carboxylate + O2 = 2 indole-5,6-quinone-2-carboxylate + 2 H2O. This is a copper-containing oxidase that functions in the formation of pigments such as melanins and other polyphenolic compounds. Catalyzes the initial and rate limiting step in the cascade of reactions leading to melanin production from tyrosine. In addition to hydroxylating tyrosine to DOPA (3,4-dihydroxyphenylalanine), also catalyzes the oxidation of DOPA to DOPA-quinone, and possibly the oxidation of DHI (5,6-dihydroxyindole) to indole-5,6 quinone. The protein is Tyrosinase (TYR) of Gorilla gorilla gorilla (Western lowland gorilla).